A 223-amino-acid chain; its full sequence is Thiamine-phosphate synthase (223 aa).

Residues 37 to 41 (QLREK) and Asn-69 each bind 4-amino-2-methyl-5-(diphosphooxymethyl)pyrimidine. The Mg(2+) site is built by Asp-70 and Asp-89. Residue Ser-108 participates in 4-amino-2-methyl-5-(diphosphooxymethyl)pyrimidine binding. 134–136 (TGT) contacts 2-[(2R,5Z)-2-carboxy-4-methylthiazol-5(2H)-ylidene]ethyl phosphate. 4-amino-2-methyl-5-(diphosphooxymethyl)pyrimidine is bound at residue Lys-137. 2-[(2R,5Z)-2-carboxy-4-methylthiazol-5(2H)-ylidene]ethyl phosphate contacts are provided by residues Gly-167 and 187-188 (VS). The segment at 197-223 (AAATRKLQGSVDTASVESQLPSEEPSA) is disordered. Polar residues predominate over residues 206 to 217 (SVDTASVESQLP).

The protein belongs to the thiamine-phosphate synthase family. The cofactor is Mg(2+).

The enzyme catalyses 2-[(2R,5Z)-2-carboxy-4-methylthiazol-5(2H)-ylidene]ethyl phosphate + 4-amino-2-methyl-5-(diphosphooxymethyl)pyrimidine + 2 H(+) = thiamine phosphate + CO2 + diphosphate. The catalysed reaction is 2-(2-carboxy-4-methylthiazol-5-yl)ethyl phosphate + 4-amino-2-methyl-5-(diphosphooxymethyl)pyrimidine + 2 H(+) = thiamine phosphate + CO2 + diphosphate. It carries out the reaction 4-methyl-5-(2-phosphooxyethyl)-thiazole + 4-amino-2-methyl-5-(diphosphooxymethyl)pyrimidine + H(+) = thiamine phosphate + diphosphate. The protein operates within cofactor biosynthesis; thiamine diphosphate biosynthesis; thiamine phosphate from 4-amino-2-methyl-5-diphosphomethylpyrimidine and 4-methyl-5-(2-phosphoethyl)-thiazole: step 1/1. In terms of biological role, condenses 4-methyl-5-(beta-hydroxyethyl)thiazole monophosphate (THZ-P) and 2-methyl-4-amino-5-hydroxymethyl pyrimidine pyrophosphate (HMP-PP) to form thiamine monophosphate (TMP). This Haloquadratum walsbyi (strain DSM 16790 / HBSQ001) protein is Thiamine-phosphate synthase.